The following is a 222-amino-acid chain: uncharacterized protein (222 aa).

This is an uncharacterized protein from Fowlpox virus (strain NVSL) (FPV).